The primary structure comprises 892 residues: Polyribonucleotide nucleotidyltransferase (892 aa).

The tract at residues 407 to 427 (YMHNYEMPPYSTGETGRVGSP) is disordered. Positions 521 and 527 each coordinate Mg(2+). The KH domain maps to 587 to 646 (PRIITTTVPVDKIGEVIGPKGKMINQIQEDTGAEIAIEDDGTVYISSEGGEAAEKAKEII). In terms of domain architecture, S1 motif spans 658-730 (GETYNGKVVK…DRGKISLAIP (73 aa)). Positions 727–892 (LAIPGFEDQE…VRRDFDPFED (166 aa)) are disordered. Basic and acidic residues-rich tracts occupy residues 739-844 (APRR…DRRS) and 851-877 (RRDD…ERSE).

The protein belongs to the polyribonucleotide nucleotidyltransferase family. It depends on Mg(2+) as a cofactor.

It is found in the cytoplasm. The catalysed reaction is RNA(n+1) + phosphate = RNA(n) + a ribonucleoside 5'-diphosphate. Involved in mRNA degradation. Catalyzes the phosphorolysis of single-stranded polyribonucleotides processively in the 3'- to 5'-direction. This Bifidobacterium adolescentis (strain ATCC 15703 / DSM 20083 / NCTC 11814 / E194a) protein is Polyribonucleotide nucleotidyltransferase.